We begin with the raw amino-acid sequence, 541 residues long: Arginine--tRNA ligase (541 aa).

The 'HIGH' region motif lies at Ala119 to His129.

This sequence belongs to the class-I aminoacyl-tRNA synthetase family. In terms of assembly, monomer.

It is found in the cytoplasm. It catalyses the reaction tRNA(Arg) + L-arginine + ATP = L-arginyl-tRNA(Arg) + AMP + diphosphate. The protein is Arginine--tRNA ligase (argS) of Helicobacter pylori (strain J99 / ATCC 700824) (Campylobacter pylori J99).